We begin with the raw amino-acid sequence, 837 residues long: Translation initiation factor IF-2 (837 aa).

Disordered regions lie at residues 1-44 (MTEK…VRKS) and 62-251 (KAQE…TKPA). Basic and acidic residues-rich tracts occupy residues 62–102 (KAQE…EAKP) and 111–165 (ADPE…HNDS). A compositionally biased stretch (basic residues) spans 189-205 (RENHIRTGKNKVTKAKK). Residues 206–229 (GGRDDNGSKDERSADRRNQKDMRG) show a composition bias toward basic and acidic residues. Positions 242–251 (TLQQAFTKPA) are enriched in polar residues. Residues 337–506 (QRAPVVTIMG…LLQSEVLELT (170 aa)) enclose the tr-type G domain. Positions 346–353 (GHVDHGKT) are G1. 346–353 (GHVDHGKT) contacts GTP. The G2 stretch occupies residues 371 to 375 (GITQH). The interval 392–395 (DTPG) is G3. GTP contacts are provided by residues 392–396 (DTPGH) and 446–449 (NKID). The segment at 446–449 (NKID) is G4. A G5 region spans residues 482 to 484 (SAK).

This sequence belongs to the TRAFAC class translation factor GTPase superfamily. Classic translation factor GTPase family. IF-2 subfamily.

It localises to the cytoplasm. One of the essential components for the initiation of protein synthesis. Protects formylmethionyl-tRNA from spontaneous hydrolysis and promotes its binding to the 30S ribosomal subunits. Also involved in the hydrolysis of GTP during the formation of the 70S ribosomal complex. This chain is Translation initiation factor IF-2, found in Actinobacillus succinogenes (strain ATCC 55618 / DSM 22257 / CCUG 43843 / 130Z).